A 273-amino-acid chain; its full sequence is uncharacterized protein (273 aa).

Residues 1 to 10 (MSSKKVKYNP) show a composition bias toward basic residues. Disordered stretches follow at residues 1-32 (MSSK…FGFN) and 50-124 (EDVE…QSSP). 3 stretches are compositionally biased toward polar residues: residues 12–24 (KSAS…SASA), 55–64 (QSFNGKSSNL), and 92–124 (PQSS…QSSP). Phosphoserine is present on S123.

It is found in the nucleus. Its subcellular location is the cytoplasm. It localises to the cytoskeleton. The protein resides in the spindle. This is an uncharacterized protein from Schizosaccharomyces pombe (strain 972 / ATCC 24843) (Fission yeast).